The chain runs to 509 residues: UDP-N-acetylmuramyl-tripeptide synthetase (509 aa).

S30 is a binding site for UDP-N-acetyl-alpha-D-muramoyl-L-alanyl-D-glutamate. G111–T117 contacts ATP. UDP-N-acetyl-alpha-D-muramoyl-L-alanyl-D-glutamate is bound by residues S155–T156, T182, and R192. K224 bears the N6-carboxylysine mark.

This sequence belongs to the MurCDEF family. MurE subfamily. Carboxylation is probably crucial for Mg(2+) binding and, consequently, for the gamma-phosphate positioning of ATP.

Its subcellular location is the cytoplasm. It participates in cell wall biogenesis; peptidoglycan biosynthesis. Functionally, catalyzes the addition of an amino acid to the nucleotide precursor UDP-N-acetylmuramoyl-L-alanyl-D-glutamate (UMAG) in the biosynthesis of bacterial cell-wall peptidoglycan. The polypeptide is UDP-N-acetylmuramyl-tripeptide synthetase (Roseiflexus sp. (strain RS-1)).